Reading from the N-terminus, the 265-residue chain is tRNA pseudouridine synthase A (265 aa).

D58 (nucleophile) is an active-site residue. Y116 contacts substrate.

The protein belongs to the tRNA pseudouridine synthase TruA family. Homodimer.

The enzyme catalyses uridine(38/39/40) in tRNA = pseudouridine(38/39/40) in tRNA. Functionally, formation of pseudouridine at positions 38, 39 and 40 in the anticodon stem and loop of transfer RNAs. This Neisseria gonorrhoeae (strain ATCC 700825 / FA 1090) protein is tRNA pseudouridine synthase A.